The chain runs to 745 residues: Junction plakoglobin (745 aa).

At Met1 the chain carries N-acetylmethionine. The O-linked (GlcNAc) threonine glycan is linked to Thr14. Residues Ser99 and Ser125 each carry the phosphoserine modification. ARM repeat units lie at residues 132 to 171, 172 to 215, 216 to 255, 258 to 297, 298 to 341, 342 to 381, 383 to 420, 423 to 464, 470 to 510, 512 to 551, 574 to 613, and 615 to 661; these read NYQD…QLSK, KEAS…LSHH, REGL…NLLL, EGAK…LLAY, GNQE…LSVC, PSNK…NLSD, ATKQ…NLTC, SKNK…HLTS, EMAQ…NLAL, PANH…QPYT, PMNR…ELAQ, and KEAA…PDYR. The interaction with DSC1 and DSG1 stretch occupies residues 132–297; the sequence is NYQDDAELAT…TTDCLQLLAY (166 aa). Ser182 carries the phosphoserine modification. The interval 574–661 is interaction with DSC1; that stretch reads PMNRMEIFRL…ISEDKNPDYR (88 aa). Phosphoserine is present on residues Ser665 and Ser730.

It belongs to the beta-catenin family. In terms of assembly, homodimer. Component of an E-cadherin/catenin adhesion complex composed of at least E-cadherin/CDH1 and gamma-catenin/JUP, and possibly alpha-catenin/CTNNA1; the complex is located to adherens junctions. The stable association of CTNNA1 is controversial as CTNNA1 was shown not to bind to F-actin when assembled in the complex. Interacts with MUC1. Interacts with CAV1. Interacts with PTPRJ. Interacts with DSG1. Interacts with DSC1 and DSC2. Interacts with PKP2. Interacts with PKP3 (via N-terminus); the interaction is required for PKP3 localization to desmosome cell-cell junctions. Interacts with DSG4. May be phosphorylated by FER.

The protein resides in the cell junction. It is found in the adherens junction. It localises to the desmosome. Its subcellular location is the cytoplasm. The protein localises to the cytoskeleton. The protein resides in the cell membrane. It is found in the nucleus. Functionally, common junctional plaque protein. The membrane-associated plaques are architectural elements in an important strategic position to influence the arrangement and function of both the cytoskeleton and the cells within the tissue. The presence of plakoglobin in both the desmosomes and in the intermediate junctions suggests that it plays a central role in the structure and function of submembranous plaques. Acts as a substrate for VE-PTP and is required by it to stimulate VE-cadherin function in endothelial cells. Can replace beta-catenin in E-cadherin/catenin adhesion complexes which are proposed to couple cadherins to the actin cytoskeleton. The sequence is that of Junction plakoglobin from Sus scrofa (Pig).